Here is a 352-residue protein sequence, read N- to C-terminus: ATP synthase subunit a 2 (352 aa).

Positions 1-26 (MRKKAISRILALVVPVLLSLNSQAFA) are cleaved as a signal peptide. Transmembrane regions (helical) follow at residues 112–132 (VVMI…AGAS), 172–192 (FLPY…LGLI), 195–215 (GATA…TFVI), 232–252 (HLTA…EILG), 264–284 (LFAN…ISFI), 289–309 (IVAV…ELFV), and 310–330 (AFLQ…LATA).

This sequence belongs to the ATPase A chain family. In terms of assembly, F-type ATPases have 2 components, CF(1) - the catalytic core - and CF(0) - the membrane proton channel. CF(1) has five subunits: alpha(3), beta(3), gamma(1), delta(1), epsilon(1). CF(0) has four main subunits: a, b, b' and c.

Its subcellular location is the cell inner membrane. In terms of biological role, key component of the proton channel; it plays a direct role in the translocation of protons across the membrane. This Chlorobaculum tepidum (strain ATCC 49652 / DSM 12025 / NBRC 103806 / TLS) (Chlorobium tepidum) protein is ATP synthase subunit a 2.